A 134-amino-acid polypeptide reads, in one-letter code: UPF0715 membrane protein YoaG (134 aa).

4 consecutive transmembrane segments (helical) span residues 9-29, 35-55, 72-92, and 106-126; these read LMTL…YSFV, IIAL…YGLF, VMYL…FFVI, and FYYM…SLIL.

It belongs to the UPF0715 family.

It is found in the cell membrane. This chain is UPF0715 membrane protein YoaG (yoaG), found in Bacillus subtilis (strain 168).